The primary structure comprises 1290 residues: Period circadian protein homolog 1 (1290 aa).

The disordered stretch occupies residues 1-134 (MSGPLEGADG…SSEQSARART (134 aa)). The interval 1 to 151 (MSGPLEGADG…LRELKLRLPP (151 aa)) is interaction with BTRC. Positions 25–38 (VPSPGPPQHRPCPG) are enriched in pro residues. 2 stretches are compositionally biased toward low complexity: residues 48 to 57 (NSNGSSGNES) and 64 to 115 (GASQ…ASSE). The span at 116 to 132 (QDNPSTSGCSSEQSARA) shows a compositional bias: polar residues. Thr-121 bears the Phosphothreonine; by CSNK1E mark. 2 positions are modified to phosphoserine; by CSNK1E: Ser-122 and Ser-126. The short motif at 138–147 (LMTALRELKL) is the Nuclear export signal 1 element. 2 PAS domains span residues 208–275 (ITSE…PSRL) and 348–414 (YEAP…KILQ). A PAC domain is found at 422-465 (HSPIRFCARNGEYVTMDTSWAGFVHPWSRKVAFVLGRHKVRTAP). A Nuclear export signal 2 motif is present at residues 489–498 (LSEQIHRLLL). Disordered regions lie at residues 508–544 (GLCGVGAVTSPGPLHSPGSSSDSNGGDAEGPGPPAPV) and 646–698 (TTKR…KEPV). 2 stretches are compositionally biased toward low complexity: residues 517–533 (SPGPLHSPGSSSDSNGG) and 652–662 (ASSSSYTTSSA). The required for phosphorylation by CSNK1E stretch occupies residues 596 to 815 (ELEAGSAPVQ…GLDSSSTAPS (220 aa)). Phosphoserine is present on residues Ser-661, Ser-663, and Ser-704. Disordered stretches follow at residues 749 to 772 (GLAPGPAPSPAPSPTVAPDPAPDA), 805 to 874 (RGLD…PPAT), and 938 to 977 (ALQTPAEGPPTPASHSPSPSLPALAPSPPHRPDSPLFNSR). The segment covering 751–769 (APGPAPSPAPSPTVAPDPA) has biased composition (pro residues). Ser-815 is modified (phosphoserine). Residues 827–843 (APPSRRHHCRSKAKRSR) carry the Nuclear localization signal motif. Basic residues predominate over residues 830–847 (SRRHHCRSKAKRSRHHQN). Over residues 860–874 (SPVPPSTPWPTPPAT) the composition is skewed to pro residues. Residues 950–961 (ASHSPSPSLPAL) are compositionally biased toward low complexity. 2 positions are modified to phosphoserine: Ser-979 and Ser-980. A Nuclear export signal 3 motif is present at residues 982-989 (LQLNLLQL). Positions 996 to 1037 (EGAAVAGGPGSSAGPPPPSAEAAEPEARLAEVTESSNQDALS) are disordered. The LXXLL signature appears at 1043 to 1047 (LELLL). A compositionally biased stretch (low complexity) spans 1051-1062 (SRSGTGSAASGS). Disordered regions lie at residues 1051–1098 (SRSG…SKYF) and 1207–1290 (SSTQ…NCTS). The segment covering 1063–1077 (LGSGLGSGSGSGSHE) has biased composition (gly residues). Over residues 1078–1095 (GGSTSASITRSSQSSHTS) the composition is skewed to low complexity. A CRY binding domain region spans residues 1149 to 1290 (SRDMTSVLKQ…ALPTAGNCTS (142 aa)). Over residues 1236–1248 (GEQGSSGGGSGEG) the composition is skewed to gly residues.

As to quaternary structure, homodimer. Component of the circadian core oscillator, which includes the CRY proteins, CLOCK or NPAS2, BMAL1 or BMAL2, CSNK1D and/or CSNK1E, TIMELESS, and the PER proteins. Interacts directly with TIMELESS, PER2, PER3, CRY1 and CRY2. Interacts with BMAL1 and CLOCK. Interacts with GPRASP1. Interacts (phosphorylated) with BTRC and FBXW11; the interactions trigger proteasomal degradation. Interacts with NONO, WDR5 and SFPQ. Interacts with USP2. Interacts with HNF4A. Post-translationally, phosphorylated on serine residues by CSNK1D, CSNK1E and probably also by CSNK1G2. Phosphorylation by CSNK1D or CSNK1E promotes nuclear location of PER proteins as well as ubiquitination and subsequent degradation. May be dephosphorylated by PP1. In terms of processing, ubiquitinated; requires phosphorylation by CSNK1E and interaction with BTRC and FBXW11. Deubiquitinated by USP2. In terms of tissue distribution, widely expressed. Expressed in hair follicles (at protein level). Found in heart, brain, placenta, lung, liver, skeletal muscle, pancreas, kidney, spleen, thymus, prostate, testis, ovary and small intestine. Highest level in skeletal muscle.

The protein localises to the nucleus. Its subcellular location is the cytoplasm. Functionally, transcriptional repressor which forms a core component of the circadian clock. The circadian clock, an internal time-keeping system, regulates various physiological processes through the generation of approximately 24 hour circadian rhythms in gene expression, which are translated into rhythms in metabolism and behavior. It is derived from the Latin roots 'circa' (about) and 'diem' (day) and acts as an important regulator of a wide array of physiological functions including metabolism, sleep, body temperature, blood pressure, endocrine, immune, cardiovascular, and renal function. Consists of two major components: the central clock, residing in the suprachiasmatic nucleus (SCN) of the brain, and the peripheral clocks that are present in nearly every tissue and organ system. Both the central and peripheral clocks can be reset by environmental cues, also known as Zeitgebers (German for 'timegivers'). The predominant Zeitgeber for the central clock is light, which is sensed by retina and signals directly to the SCN. The central clock entrains the peripheral clocks through neuronal and hormonal signals, body temperature and feeding-related cues, aligning all clocks with the external light/dark cycle. Circadian rhythms allow an organism to achieve temporal homeostasis with its environment at the molecular level by regulating gene expression to create a peak of protein expression once every 24 hours to control when a particular physiological process is most active with respect to the solar day. Transcription and translation of core clock components (CLOCK, NPAS2, BMAL1, BMAL2, PER1, PER2, PER3, CRY1 and CRY2) plays a critical role in rhythm generation, whereas delays imposed by post-translational modifications (PTMs) are important for determining the period (tau) of the rhythms (tau refers to the period of a rhythm and is the length, in time, of one complete cycle). A diurnal rhythm is synchronized with the day/night cycle, while the ultradian and infradian rhythms have a period shorter and longer than 24 hours, respectively. Disruptions in the circadian rhythms contribute to the pathology of cardiovascular diseases, cancer, metabolic syndromes and aging. A transcription/translation feedback loop (TTFL) forms the core of the molecular circadian clock mechanism. Transcription factors, CLOCK or NPAS2 and BMAL1 or BMAL2, form the positive limb of the feedback loop, act in the form of a heterodimer and activate the transcription of core clock genes and clock-controlled genes (involved in key metabolic processes), harboring E-box elements (5'-CACGTG-3') within their promoters. The core clock genes: PER1/2/3 and CRY1/2 which are transcriptional repressors form the negative limb of the feedback loop and interact with the CLOCK|NPAS2-BMAL1|BMAL2 heterodimer inhibiting its activity and thereby negatively regulating their own expression. This heterodimer also activates nuclear receptors NR1D1/2 and RORA/B/G, which form a second feedback loop and which activate and repress BMAL1 transcription, respectively. Regulates circadian target genes expression at post-transcriptional levels, but may not be required for the repression at transcriptional level. Controls PER2 protein decay. Represses CRY2 preventing its repression on CLOCK/BMAL1 target genes such as FXYD5 and SCNN1A in kidney and PPARA in liver. Besides its involvement in the maintenance of the circadian clock, has an important function in the regulation of several processes. Participates in the repression of glucocorticoid receptor NR3C1/GR-induced transcriptional activity by reducing the association of NR3C1/GR to glucocorticoid response elements (GREs) by BMAL1:CLOCK. Plays a role in the modulation of the neuroinflammatory state via the regulation of inflammatory mediators release, such as CCL2 and IL6. In spinal astrocytes, negatively regulates the MAPK14/p38 and MAPK8/JNK MAPK cascades as well as the subsequent activation of NFkappaB. Coordinately regulates the expression of multiple genes that are involved in the regulation of renal sodium reabsorption. Can act as gene expression activator in a gene and tissue specific manner, in kidney enhances WNK1 and SLC12A3 expression in collaboration with CLOCK. Modulates hair follicle cycling. Represses the CLOCK-BMAL1 induced transcription of BHLHE40/DEC1. The protein is Period circadian protein homolog 1 (PER1) of Homo sapiens (Human).